The following is a 546-amino-acid chain: MGNTVHRTLPDSSPPARLLATRPCYGPGPERRAVLGEAPRFHAQAKGKNVRLDGHSRRATRRNSFCNGVTFTQRPIRLYEQVRLRLVAVRPGWSGALRFGFTAHDPSLMSAQDIPKYACPDLVTRPGYWAKALPENLALRDTVLAYWADRHGRVFYSVNDGEPVLFHCGVAVGGPLWALIDVYGITDEVQLLESTFADTLTPLRLGQARLSACPPPGSHDAANFDNNELENNQVVAKLGHLALGRPDAAVPCVARERPRPASSPALLDAELRFHATRGPDVSLSADRRLACAPRPDGGRTLVFSERPLRPGESLCVEVGRPGLAAPAAVAFGITSCDPGALRPSELPADPAALLDRKEYWVVARAGPVPSGGDALSFTLRPGGDVLLAVNGRPRGRLLCVDTSQALWAFFAVRGGVAGQLRLLGTLQSSSETMTPSGSFSGSQDDSDSDMTFGVNQSSSASESSLVTAPSSPLSPPVSPAFSAPEPTGSRNGECTVCFDSEVDTVIYTCGHMCLCHGCGLRLRRQARACCPICRRPIKDVIKIYRP.

Residues 38 to 194 (APRFHAQAKG…ITDEVQLLES (157 aa)) form the NHR 1 domain. At Thr199 the chain carries Phosphothreonine. In terms of domain architecture, NHR 2 spans 270-424 (ELRFHATRGP…GVAGQLRLLG (155 aa)). A disordered region spans residues 429–490 (SSETMTPSGS…FSAPEPTGSR (62 aa)). Over residues 457–471 (SSSASESSLVTAPSS) the composition is skewed to low complexity. The segment at 494-534 (CTVCFDSEVDTVIYTCGHMCLCHGCGLRLRRQARACCPICR) adopts an RING-type zinc-finger fold.

Interacts with DLL1 and DLL4. As to expression, expressed in the limb buds and dorsal root ganglia. Expressed in brain and kidney and at low levels in the heart.

It is found in the cytoplasm. The enzyme catalyses S-ubiquitinyl-[E2 ubiquitin-conjugating enzyme]-L-cysteine + [acceptor protein]-L-lysine = [E2 ubiquitin-conjugating enzyme]-L-cysteine + N(6)-ubiquitinyl-[acceptor protein]-L-lysine.. It participates in protein modification; protein ubiquitination. In terms of biological role, E3 ubiquitin-protein ligase involved in regulation of the Notch pathway through influencing the stability and activity of several Notch ligands. The polypeptide is E3 ubiquitin-protein ligase NEURL1B (Neurl1b) (Mus musculus (Mouse)).